The primary structure comprises 500 residues: Serine/threonine-protein phosphatase 2A 56 kDa regulatory subunit beta isoform (500 aa).

Positions 1–19 are enriched in low complexity; sequence METKLPPASTPTSPSSPGL. Disordered stretches follow at residues 1-55 and 474-500; these read METK…YQSN and GTQG…GGQS. A phosphoserine; by CLK2 mark is found at Ser-32, Ser-35, Ser-44, Ser-46, Ser-47, and Ser-48. A compositionally biased stretch (basic residues) spans 34 to 45; the sequence is RSLRRARPRRSH.

The protein belongs to the phosphatase 2A regulatory subunit B56 family. Component of the serine/threonine-protein phosphatase 2A complex (PP2A). This complex consists of a common heterodimeric core enzyme, composed of a 36 kDa catalytic subunit (subunit C) and a 65 kDa constant scaffold subunit (PR65 or subunit A), that associates with a variety of regulatory subunits. Proteins that associate with the core dimer include three families of regulatory subunits B (the R2/B/PR55/B55, R3/B''/PR72/PR130/PR59 and R5/B'/B56 families), the 48 kDa variable regulatory subunit, viral proteins, and cell signaling molecules. Interacts with SGO1. Interacts with AKT1. As to expression, highly expressed in brain.

Its subcellular location is the nucleus. Functionally, as the regulatory component of the serine/threonine-protein phosphatase 2A (PP2A) holoenzyme, modulates substrate specificity, subcellular localization, and responsiveness to phosphorylation. The phosphorylated form mediates the interaction between PP2A and AKT1, leading to AKT1 dephosphorylation. This is Serine/threonine-protein phosphatase 2A 56 kDa regulatory subunit beta isoform (PPP2R5B) from Oryctolagus cuniculus (Rabbit).